The sequence spans 1185 residues: Adhesion G-protein coupled receptor G6 (1185 aa).

The N-terminal stretch at 1–32 (MISFISGRWWRWKFQNTLAVFLLLICLSTSVA) is a signal peptide. Residues 33-849 (QSCQSSTSCN…AELIDEKNNR (817 aa)) are Extracellular-facing. Cys-41 and Cys-67 form a disulfide bridge. A CUB domain is found at 41 to 149 (CNVVLTDSQG…KGFHISYKQV (109 aa)). A mediates interaction with type IV collagen region spans residues 41 to 354 (CNVVLTDSQG…SSTQTDSTLS (314 aa)). The segment at 41–839 (CNVVLTDSQG…FGILMDVSRA (799 aa)) is inhibits receptor signaling in absence of type IV collagen. A glycan (N-linked (GlcNAc...) asparagine) is linked at Asn-68. Glu-89 and Asp-97 together coordinate Ca(2+). A disulfide bridge links Cys-94 with Cys-111. Asn-121 is a glycosylation site (N-linked (GlcNAc...) asparagine). Ca(2+) is bound by residues Asp-134, Ser-136, and Val-137. One can recognise a Pentraxin (PTX) domain in the interval 154–355 (RNQKVTMPKS…STQTDSTLSC (202 aa)). Cystine bridges form between Cys-185-Cys-248, Cys-229-Cys-271, and Cys-369-Cys-375. Residues Asn-395, Asn-429, Asn-470, Asn-539, Asn-550, Asn-562, Asn-565, Asn-613, Asn-680, Asn-691, Asn-719, Asn-763, Asn-799, and Asn-818 are each glycosylated (N-linked (GlcNAc...) asparagine). 2 disulfides stabilise this stretch: Cys-508–Cys-544 and Cys-532–Cys-563. In terms of domain architecture, GAIN-B spans 658–840 (PSLTISSKNL…GILMDVSRAA (183 aa)). Disulfide bonds link Cys-790–Cys-822 and Cys-809–Cys-824. Residues 790-840 (CVFWDFNLQNYSGGCNSDGCKVGSDSNSNRTVCLCNHLTHFGILMDVSRAA) are GPS. The interval 829–837 (HFGILMDVS) is stachel. A helical transmembrane segment spans residues 850-870 (VLTFITYIGCGISAIFSAATL). Residues 871-886 (LTYIAFEKLRRDYPSK) are Cytoplasmic-facing. Residues 887-907 (ILMNLSTSLLFLNMVFLLDGW) form a helical membrane-spanning segment. The Extracellular portion of the chain corresponds to 908 to 915 (LASYEIKE). A helical membrane pass occupies residues 916 to 936 (LCVTVAVFLHFFLLTSFTWMG). Over 937–957 (LESIHMYIALVKVFNTYIRRY) the chain is Cytoplasmic. The chain crosses the membrane as a helical span at residues 958–978 (ILKFCIVGWGVPAAIVGIVLA). At 979–1013 (VSKDSYGKNYYGKGKDGQGTSEFCWILNPVVFYVT) the chain is on the extracellular side. The chain crosses the membrane as a helical span at residues 1014–1034 (CVAYFSIIFLMNVAMFIVVMI). At 1035-1057 (QICGRNGKRSNRTLREDILRNLR) the chain is on the cytoplasmic side. A helical transmembrane segment spans residues 1058–1080 (SVVSLTFLLGMTWGFAFFAWGPV). The Extracellular segment spans residues 1081-1083 (SLA). Residues 1084–1106 (FMYLFTIFNSLQGLFIFVFHCAL) form a helical membrane-spanning segment. Position 1092 (Asn-1092) interacts with 17alpha-hydroxyprogesterone. Over 1107 to 1185 (KENVQKQWRR…RHSNADSTLQ (79 aa)) the chain is Cytoplasmic. The segment at 1138-1160 (NTKKVSSDNLGKSLSSSSFGSTT) is disordered. Low complexity predominate over residues 1144–1158 (SDNLGKSLSSSSFGS).

The protein belongs to the G-protein coupled receptor 2 family. Adhesion G-protein coupled receptor (ADGR) subfamily. Autoproteolytically processed at the GPS region of the GAIN-B domain; this cleavage modulates receptor activity. Expressed in Schwann cells of the posterior lateral line nerve and in brain.

It is found in the cell membrane. With respect to regulation, forms a heterodimer of 2 chains generated by proteolytic processing that remain associated through non-covalent interactions mediated by the GAIN-B domain. In the inactivated receptor, the Stachel sequence (also named stalk) is embedded in the GAIN-B domain, where it adopts a beta-strand conformation. On activation, the Stachel moves into the 7 transmembrane region and adopts a twisted hook-shaped configuration that forms contacts within the receptor, leading to coupling of a G-alpha protein, which activates signaling. The cleaved GAIN-B and N-terminal domains can then dissociate from the rest of the receptor. Its function is as follows. Adhesion G-protein coupled receptor (aGPCR) for steroid hormones, such as progesterone and 17alpha-hydroxyprogesterone (17OHP). Ligand binding causes a conformation change that triggers signaling via guanine nucleotide-binding proteins (G proteins) and modulates the activity of downstream effectors, such as adenylate cyclase. Adgrg6 is coupled to G(i) G alpha proteins and mediates inhibition of adenylate cyclase. Also able to couple to G(q) G proteins. Involved in myelination of the peripheral nervous system: required for differentiation of promyelinating Schwann cells and for normal myelination of axons. G-protein coupled receptor activity can also be activated by type IV collagen, a major constituent of the basement membrane. Also plays a role inner ear development. The protein is Adhesion G-protein coupled receptor G6 (adgrg6) of Danio rerio (Zebrafish).